The primary structure comprises 1247 residues: F-box/WD repeat-containing protein A (1247 aa).

The START domain maps to 1 to 214 (MQYVNGNDIS…PATVSGRLAK (214 aa)). 2 disordered regions span residues 484–514 (GNKD…DNII) and 552–576 (QQPQ…KEIK). Over residues 552 to 566 (QQPQQQQQQPQEQQQ) the composition is skewed to low complexity. Positions 631 to 677 (NSGFDNLPEEVVQIIFSNLSAINIVNLSLVCKRFKMATDSPILWKNL) constitute an F-box domain. Disordered stretches follow at residues 697 to 744 (SNLS…QQQQ) and 833 to 856 (GQES…KRDN). Composition is skewed to low complexity over residues 707–719 (NSNS…GSSS) and 726–744 (QQQN…QQQQ). Residues 833–846 (GQESPINKNSSDNP) show a composition bias toward polar residues. WD repeat units lie at residues 895-934 (GHNR…GDYE), 945-984 (DHTQ…IEVI), 988-1025 (RPTN…LLWN), 1029-1073 (AHTK…CINT), 1076-1114 (GHSY…TFIS), 1119-1158 (KHTG…LSNI), and 1218-1247 (NHES…RWDF).

Component of an SCF complex including at least culA. Formation of this complex appears to require activity of the MAP kinase erk2. Interacts with regA.

Substrate recognition component of a SCF (SKP1-CUL1-F-box protein) E3 ubiquitin-protein ligase complex which mediates the ubiquitination and subsequent proteasomal degradation of target proteins. May target the cAMP phosphodiesterase regA for degradation leading to an increase in cAMP and PKA activity. Promotes development of prestalk cells as opposed to prespores within the developing fruiting body. Required for culmination and fruiting body development. This chain is F-box/WD repeat-containing protein A (fbxA), found in Dictyostelium discoideum (Social amoeba).